A 200-amino-acid polypeptide reads, in one-letter code: Holliday junction branch migration complex subunit RuvA (200 aa).

The segment at 1 to 64 (MFAYFRGKLT…EDLLQLYGFS (64 aa)) is domain I. Residues 65-143 (GEEERQLFRL…KLSPVSALAS (79 aa)) are domain II. The segment at 144-154 (PARLSSTLLRD) is flexible linker. Positions 154–200 (DDAVNALVTLGFSRIIVQKAVVAILEQNPGLTVEEVIKAALVSIHNS) are domain III.

It belongs to the RuvA family. As to quaternary structure, homotetramer. Forms an RuvA(8)-RuvB(12)-Holliday junction (HJ) complex. HJ DNA is sandwiched between 2 RuvA tetramers; dsDNA enters through RuvA and exits via RuvB. An RuvB hexamer assembles on each DNA strand where it exits the tetramer. Each RuvB hexamer is contacted by two RuvA subunits (via domain III) on 2 adjacent RuvB subunits; this complex drives branch migration. In the full resolvosome a probable DNA-RuvA(4)-RuvB(12)-RuvC(2) complex forms which resolves the HJ.

It is found in the cytoplasm. In terms of biological role, the RuvA-RuvB-RuvC complex processes Holliday junction (HJ) DNA during genetic recombination and DNA repair, while the RuvA-RuvB complex plays an important role in the rescue of blocked DNA replication forks via replication fork reversal (RFR). RuvA specifically binds to HJ cruciform DNA, conferring on it an open structure. The RuvB hexamer acts as an ATP-dependent pump, pulling dsDNA into and through the RuvAB complex. HJ branch migration allows RuvC to scan DNA until it finds its consensus sequence, where it cleaves and resolves the cruciform DNA. This is Holliday junction branch migration complex subunit RuvA from Pelodictyon phaeoclathratiforme (strain DSM 5477 / BU-1).